The following is a 107-amino-acid chain: MIIVTNTAKITKGNGHKLIDRFNKVGQVETMPGFLGLEVLLTQNTVDYDEVTISTRWNAKEDFQGWTKSPAFKDAHSHQGGMPDYILDNKITYYNVEVVRMPMAAAQ.

Residues 2–94 (IIVTNTAKIT…YILDNKITYY (93 aa)) enclose the ABM domain. A Fe cation-binding site is contributed by N6. H76 is a heme binding site.

The protein belongs to the antibiotic biosynthesis monooxygenase family. Heme-degrading monooxygenase IsdG subfamily. In terms of assembly, homodimer.

It is found in the cytoplasm. The catalysed reaction is heme b + 3 reduced [NADPH--hemoprotein reductase] + 3 O2 = biliverdin IXalpha + CO + Fe(2+) + 3 oxidized [NADPH--hemoprotein reductase] + 3 H2O + H(+). Functionally, allows bacterial pathogens to use the host heme as an iron source. Catalyzes the oxidative degradation of the heme macrocyclic porphyrin ring to the biliverdin in the presence of a suitable electron donor such as ascorbate or NADPH--cytochrome P450 reductase, with subsequent release of free iron. The sequence is that of Heme-degrading monooxygenase from Bacillus thuringiensis subsp. konkukian (strain 97-27).